Consider the following 190-residue polypeptide: 3-isopropylmalate dehydratase small subunit (190 aa).

It belongs to the LeuD family. LeuD type 1 subfamily. Heterodimer of LeuC and LeuD.

The catalysed reaction is (2R,3S)-3-isopropylmalate = (2S)-2-isopropylmalate. Its pathway is amino-acid biosynthesis; L-leucine biosynthesis; L-leucine from 3-methyl-2-oxobutanoate: step 2/4. In terms of biological role, catalyzes the isomerization between 2-isopropylmalate and 3-isopropylmalate, via the formation of 2-isopropylmaleate. The sequence is that of 3-isopropylmalate dehydratase small subunit from Staphylococcus aureus (strain JH1).